The sequence spans 936 residues: Protein translocase subunit SecA (936 aa).

ATP contacts are provided by residues glutamine 87, glycine 105–threonine 109, and aspartate 515. Zn(2+) contacts are provided by cysteine 920, cysteine 922, cysteine 931, and histidine 932.

The protein belongs to the SecA family. Monomer and homodimer. Part of the essential Sec protein translocation apparatus which comprises SecA, SecYEG and auxiliary proteins SecDF-YajC and YidC. Requires Zn(2+) as cofactor.

The protein resides in the cell inner membrane. The protein localises to the cytoplasm. The catalysed reaction is ATP + H2O + cellular proteinSide 1 = ADP + phosphate + cellular proteinSide 2.. In terms of biological role, part of the Sec protein translocase complex. Interacts with the SecYEG preprotein conducting channel. Has a central role in coupling the hydrolysis of ATP to the transfer of proteins into and across the cell membrane, serving both as a receptor for the preprotein-SecB complex and as an ATP-driven molecular motor driving the stepwise translocation of polypeptide chains across the membrane. The chain is Protein translocase subunit SecA from Paraburkholderia xenovorans (strain LB400).